Here is a 166-residue protein sequence, read N- to C-terminus: Phospholipase A2 inhibitor clone 04 (166 aa).

An N-terminal signal peptide occupies residues 1–19 (MRLILLSSLLLLGIFLANG). Positions 46–161 (LKDAFLTVHR…CDDNRLVVCE (116 aa)) constitute a C-type lectin domain. 2 cysteine pairs are disulfide-bonded: Cys83-Cys160 and Cys138-Cys152. Asn122 carries N-linked (GlcNAc...) asparagine glycosylation.

Belongs to the alpha-type phospholipase A2 inhibitor family. Homotrimer; non-covalently linked. In terms of tissue distribution, expressed by the liver.

The protein resides in the secreted. Its function is as follows. This phospholipase A2 inhibitor binds directly phospholipase A2 in the presence or absence of calcium. This is Phospholipase A2 inhibitor clone 04 from Bothrops moojeni (Lance-headed viper).